The sequence spans 193 residues: Large ribosomal subunit protein bL25 (193 aa).

It belongs to the bacterial ribosomal protein bL25 family. CTC subfamily. In terms of assembly, part of the 50S ribosomal subunit; part of the 5S rRNA/L5/L18/L25 subcomplex. Contacts the 5S rRNA. Binds to the 5S rRNA independently of L5 and L18.

This is one of the proteins that binds to the 5S RNA in the ribosome where it forms part of the central protuberance. This is Large ribosomal subunit protein bL25 from Lachnoclostridium phytofermentans (strain ATCC 700394 / DSM 18823 / ISDg) (Clostridium phytofermentans).